The primary structure comprises 251 residues: tRNA (guanine-N(7)-)-methyltransferase (251 aa).

Residues 1 to 43 are disordered; sequence MQPNEQPGTGPADTTLEQQDTAAAEVGHPRRIRSFVRRAGRTS. Over residues 29 to 40 the composition is skewed to basic residues; that stretch reads PRRIRSFVRRAG. Residues Glu82, Glu107, Asp134, and Asp157 each contribute to the S-adenosyl-L-methionine site. Asp157 is an active-site residue. Lys161 is a substrate binding site. The interval 163–168 is interaction with RNA; sequence RHNKRR. Substrate contacts are provided by residues Asp193 and 228–231; that span reads TKFE.

The protein belongs to the class I-like SAM-binding methyltransferase superfamily. TrmB family.

It catalyses the reaction guanosine(46) in tRNA + S-adenosyl-L-methionine = N(7)-methylguanosine(46) in tRNA + S-adenosyl-L-homocysteine. Its pathway is tRNA modification; N(7)-methylguanine-tRNA biosynthesis. Functionally, catalyzes the formation of N(7)-methylguanine at position 46 (m7G46) in tRNA. This Ralstonia nicotianae (strain ATCC BAA-1114 / GMI1000) (Ralstonia solanacearum) protein is tRNA (guanine-N(7)-)-methyltransferase.